A 205-amino-acid polypeptide reads, in one-letter code: MNRFVVAEPLWCTGCNTCLAACSDVHKTQGLQQHPRLALAKTSTITAPVVCHHCEEAPCLQVCPVNAISQRDDAIQLNESLCIGCKLCAVVCPFGAISASGSRPVNAHAQYVFQAEGSLKDGEENAPTQHALLRWEPGVQTVAVKCDLCDFLPEGPACVRACPNQALRLITGDSLQRQMKEKQRLAASWFANGGEDPLSLTQEQR.

4Fe-4S ferredoxin-type domains follow at residues 2 to 31 (NRFV…TQGL), 41 to 72 (KTST…SQRD), 73 to 102 (DAIQ…ASGS), and 140 to 172 (QTVA…LITG). Residues C12, C15, C18, C22, C51, C54, C59, C63, C82, C85, C88, C92, C146, C149, C158, and C162 each contribute to the [4Fe-4S] cluster site.

[4Fe-4S] cluster is required as a cofactor.

Its function is as follows. Probable electron transfer protein for hydrogenase 4. This Escherichia coli (strain K12) protein is Hydrogenase-4 component A.